The sequence spans 239 residues: Adapter protein MecA (239 aa).

Residues 118–128 are compositionally biased toward basic and acidic residues; that stretch reads EQRTKEKEAQG. Residues 118-137 form a disordered region; the sequence is EQRTKEKEAQGSKRQKSSAR.

This sequence belongs to the MecA family. In terms of assembly, homodimer.

Functionally, enables the recognition and targeting of unfolded and aggregated proteins to the ClpC protease or to other proteins involved in proteolysis. This is Adapter protein MecA from Staphylococcus aureus (strain COL).